We begin with the raw amino-acid sequence, 158 residues long: Frataxin homolog, mitochondrial (158 aa).

The protein belongs to the frataxin family. Monomer. Oligomer.

The protein resides in the mitochondrion. It catalyses the reaction 4 Fe(2+) + O2 + 4 H(+) = 4 Fe(3+) + 2 H2O. In terms of biological role, promotes the biosynthesis of heme as well as the assembly and repair of iron-sulfur clusters by delivering Fe(2+) to proteins involved in these pathways. May play a role in the protection against iron-catalyzed oxidative stress through its ability to catalyze the oxidation of Fe(2+) to Fe(3+). May be able to store large amounts of the metal in the form of a ferrihydrite mineral by oligomerization. The sequence is that of Frataxin homolog, mitochondrial from Schizosaccharomyces pombe (strain 972 / ATCC 24843) (Fission yeast).